The primary structure comprises 276 residues: Sulfur carrier protein FdhD (276 aa).

C122 serves as the catalytic Cysteine persulfide intermediate. Position 259–264 (259–264 (FCKPGK)) interacts with Mo-bis(molybdopterin guanine dinucleotide).

This sequence belongs to the FdhD family.

It localises to the cytoplasm. Its function is as follows. Required for formate dehydrogenase (FDH) activity. Acts as a sulfur carrier protein that transfers sulfur from IscS to the molybdenum cofactor prior to its insertion into FDH. The sequence is that of Sulfur carrier protein FdhD from Photorhabdus laumondii subsp. laumondii (strain DSM 15139 / CIP 105565 / TT01) (Photorhabdus luminescens subsp. laumondii).